The following is a 284-amino-acid chain: tRNA-cytidine(32) 2-sulfurtransferase (284 aa).

The PP-loop motif signature appears at 45 to 50; that stretch reads SGGKDS. Cys-120, Cys-123, and Cys-211 together coordinate [4Fe-4S] cluster.

This sequence belongs to the TtcA family. Homodimer. It depends on Mg(2+) as a cofactor. The cofactor is [4Fe-4S] cluster.

It is found in the cytoplasm. It catalyses the reaction cytidine(32) in tRNA + S-sulfanyl-L-cysteinyl-[cysteine desulfurase] + AH2 + ATP = 2-thiocytidine(32) in tRNA + L-cysteinyl-[cysteine desulfurase] + A + AMP + diphosphate + H(+). It functions in the pathway tRNA modification. Catalyzes the ATP-dependent 2-thiolation of cytidine in position 32 of tRNA, to form 2-thiocytidine (s(2)C32). The sulfur atoms are provided by the cysteine/cysteine desulfurase (IscS) system. This is tRNA-cytidine(32) 2-sulfurtransferase from Alcanivorax borkumensis (strain ATCC 700651 / DSM 11573 / NCIMB 13689 / SK2).